We begin with the raw amino-acid sequence, 352 residues long: ATPase GET3 (352 aa).

Residue 26–33 (KGGVGKTT) participates in ATP binding. D57 is an active-site residue. The ATP site is built by E243 and N270. Zn(2+) contacts are provided by C283 and C286.

The protein belongs to the arsA ATPase family. In terms of assembly, homodimer. Component of the Golgi to ER traffic (GET) complex, which is composed of GET1, GET2 and GET3. Within the complex, GET1 and GET2 form a heterotetramer which is stabilized by phosphatidylinositol binding and which binds to the GET3 homodimer. Interacts with the chloride channel protein GEF1.

The protein localises to the cytoplasm. The protein resides in the endoplasmic reticulum. Its subcellular location is the golgi apparatus. ATPase required for the post-translational delivery of tail-anchored (TA) proteins to the endoplasmic reticulum. Recognizes and selectively binds the transmembrane domain of TA proteins in the cytosol. This complex then targets to the endoplasmic reticulum by membrane-bound receptors GET1 and GET2, where the tail-anchored protein is released for insertion. This process is regulated by ATP binding and hydrolysis. ATP binding drives the homodimer towards the closed dimer state, facilitating recognition of newly synthesized TA membrane proteins. ATP hydrolysis is required for insertion. Subsequently, the homodimer reverts towards the open dimer state, lowering its affinity for the GET1-GET2 receptor, and returning it to the cytosol to initiate a new round of targeting. Cooperates with the HDEL receptor ERD2 to mediate the ATP-dependent retrieval of resident ER proteins that contain a C-terminal H-D-E-L retention signal from the Golgi to the ER. Involved in low-level resistance to the oxyanions arsenite and arsenate, and in heat tolerance. This Vanderwaltozyma polyspora (strain ATCC 22028 / DSM 70294 / BCRC 21397 / CBS 2163 / NBRC 10782 / NRRL Y-8283 / UCD 57-17) (Kluyveromyces polysporus) protein is ATPase GET3.